The sequence spans 244 residues: Small ribosomal subunit protein uS2 (244 aa).

This sequence belongs to the universal ribosomal protein uS2 family.

The chain is Small ribosomal subunit protein uS2 from Buchnera aphidicola subsp. Acyrthosiphon pisum (strain 5A).